Consider the following 869-residue polypeptide: MNPATMTRQLSSDGRMFASSIITVIPDSSPTAAEAIELSSPLSLPSPTSLLDFLSTSTSRGPARSDTDGDKTQGKEVLDTKPILENSFRRENRVVSGTGGKAATGKKLKRRTESPGNVCQSEIHIVPGERIILRQTRPDKKAAKAKRTKKEDGLINRKLYGRVSKANQTVSLQPETKKSAPKGCNDTTQPADNGHINDLDDGLQLEQAIQRRLDWTPTKDTTIPVIDLVGDSPSSCEKSLSGMRSTRTMLSNYEFSGIVGTLGGSRSEGTPDAPTTKRPVELLKVNNLKEISGLSDSRQSSITEDSESATSKPRRVKAKNPPKSKLTTITSYATAKYTVVEKSVDLDPVETLLSDEPGKEKNVAKRTSGARCAKPGRKKSATTEKKNEPPIFKVVPPLEAFKAFDGQELLFGTSSQLANGHSEDRHEQNEGTSHISNSSAFIPLSRSESSSKAPSQTSLGSGFLKLSSSKNLWSAGARDLTGAVLEIDEIDLSEHWMKPSIFESQPKAPLGCKADTQIPPQLGEIDFDNSCQKPLAAIDPPELVTQSETPSEKGDLHKYIVKPTHINSCSQSGSSISVGSPEKPVQDKPIFSGFTTSELAKKVAAYGFKPIKSRDKMIALLEKCWENRNKTSNSVPKLTPGDGLSQVDESTQGQSLGQHLKPNSIPQTATTQVPKVKPDKRDTKSQGVPVPSRRSTSTSKVSRKRTESPSAILVDDDQRSDSTGDSVPPSRPRRPSKSCTPRDRQKSPESFNLPTIPLTIRSGKIPSTGTASETLPSLSTQITAAIKAQPRLRAFNGVKQPTWYEKILMYDPIQLEDLAVWLNTDGFERIGEDREVCPGLVREWCESKGVCCIWRKQRGVRAHCPLVRA.

Residues 40–59 show a composition bias toward low complexity; sequence SPLSLPSPTSLLDFLSTSTS. 7 disordered regions span residues 40–79, 92–116, 165–199, 293–323, 351–388, 418–437, and 630–774; these read SPLS…EVLD, NRVV…ESPG, KANQ…INDL, GLSD…NPPK, TLLS…KKNE, ANGH…HISN, and KTSN…ASET. Residues 63-79 show a composition bias toward basic and acidic residues; that stretch reads ARSDTDGDKTQGKEVLD. Polar residues-rich tracts occupy residues 165–174 and 294–311; these read KANQTVSLQP and LSDS…SATS. The span at 312–322 shows a compositional bias: basic residues; the sequence is KPRRVKAKNPP. Composition is skewed to polar residues over residues 647–657 and 664–673; these read VDESTQGQSLG and SIPQTATTQV. Residues 688 to 700 are compositionally biased toward low complexity; that stretch reads VPVPSRRSTSTSK. A compositionally biased stretch (polar residues) spans 765–774; it reads IPSTGTASET.

The protein belongs to the SLX4 family. As to quaternary structure, forms a heterodimer with SLX1. Post-translationally, phosphorylated in response to DNA damage.

Its subcellular location is the nucleus. In terms of biological role, regulatory subunit of the SLX1-SLX4 structure-specific endonuclease that resolves DNA secondary structures generated during DNA repair and recombination. Has endonuclease activity towards branched DNA substrates, introducing single-strand cuts in duplex DNA close to junctions with ss-DNA. The polypeptide is Structure-specific endonuclease subunit SLX4 (Paracoccidioides brasiliensis (strain Pb18)).